We begin with the raw amino-acid sequence, 45 residues long: Cytochrome b559 subunit beta (45 aa).

The chain crosses the membrane as a helical span at residues 20-36 (WIAVHTLAVPTVFFLGA). Histidine 24 provides a ligand contact to heme.

It belongs to the PsbE/PsbF family. As to quaternary structure, heterodimer of an alpha subunit and a beta subunit. PSII is composed of 1 copy each of membrane proteins PsbA, PsbB, PsbC, PsbD, PsbE, PsbF, PsbH, PsbI, PsbJ, PsbK, PsbL, PsbM, PsbT, PsbX, PsbY, PsbZ, Psb30/Ycf12, peripheral proteins PsbO, CyanoQ (PsbQ), PsbU, PsbV and a large number of cofactors. It forms dimeric complexes. It depends on heme b as a cofactor.

The protein localises to the cellular thylakoid membrane. In terms of biological role, this b-type cytochrome is tightly associated with the reaction center of photosystem II (PSII). PSII is a light-driven water:plastoquinone oxidoreductase that uses light energy to abstract electrons from H(2)O, generating O(2) and a proton gradient subsequently used for ATP formation. It consists of a core antenna complex that captures photons, and an electron transfer chain that converts photonic excitation into a charge separation. The protein is Cytochrome b559 subunit beta of Nostoc sp. (strain PCC 7120 / SAG 25.82 / UTEX 2576).